A 178-amino-acid chain; its full sequence is Adenine phosphoribosyltransferase (178 aa).

This sequence belongs to the purine/pyrimidine phosphoribosyltransferase family. In terms of assembly, homodimer.

The protein localises to the cytoplasm. The catalysed reaction is AMP + diphosphate = 5-phospho-alpha-D-ribose 1-diphosphate + adenine. It participates in purine metabolism; AMP biosynthesis via salvage pathway; AMP from adenine: step 1/1. Functionally, catalyzes a salvage reaction resulting in the formation of AMP, that is energically less costly than de novo synthesis. The sequence is that of Adenine phosphoribosyltransferase from Cereibacter sphaeroides (strain KD131 / KCTC 12085) (Rhodobacter sphaeroides).